The chain runs to 433 residues: Monodehydroascorbate reductase (433 aa).

FAD contacts are provided by residues 13 to 16, Glu40, Arg47, Lys52, Ile95, and 146 to 147; these read GGVS and RE. Residues 171 to 177, Glu195, Arg201, and Gly260 each bind NAD(+); that span reads GGYIGLE. Position 173-177 (173-177) interacts with NADP(+); the sequence is YIGLE. Residues Arg201 and Gly260 each coordinate NADP(+). An FAD-binding site is contributed by Asp297. An NAD(+)-binding site is contributed by 313 to 314; the sequence is EH. 313 to 314 serves as a coordination point for NADP(+); the sequence is EH. Val315 contributes to the FAD binding site. L-ascorbate is bound at residue Arg319. Tyr348 contributes to the FAD binding site. Position 348 (Tyr348) interacts with NAD(+). Position 348 (Tyr348) interacts with NADP(+). Arg350 lines the L-ascorbate pocket.

It belongs to the FAD-dependent oxidoreductase family. It depends on FAD as a cofactor. As to expression, expressed in leaves, and to a lesser degree in stems, roots and all stages of fruit.

The protein localises to the cytoplasm. It carries out the reaction 2 monodehydro-L-ascorbate radical + NADH + H(+) = 2 L-ascorbate + NAD(+). In terms of biological role, catalyzes the conversion of monodehydroascorbate to ascorbate, oxidizing NADH in the process. The chain is Monodehydroascorbate reductase from Solanum lycopersicum (Tomato).